The following is a 336-amino-acid chain: Atypical chemokine receptor 1 (336 aa).

Over 1-63 (MGNCLHPAEL…CNLLDDSALP (63 aa)) the chain is Extracellular. Residues N16, N27, and N33 are each glycosylated (N-linked (GlcNAc...) asparagine). Intrachain disulfides connect C51/C276 and C129/C195. Residues 64-84 (FFILVSVLGILASGIVLFMFF) form a helical membrane-spanning segment. Over 85–95 (RPLFHWQLCPG) the chain is Cytoplasmic. Residues 96–116 (WPVLAQLAVGSALFSIVVPIL) form a helical membrane-spanning segment. Topologically, residues 117–129 (APGLGNTRSSALC) are extracellular. The chain crosses the membrane as a helical span at residues 130 to 153 (SLGYCVWYGSAFAQALLLGCHASL). Residues 154–166 (GPKLGADQVPGLT) lie on the Cytoplasmic side of the membrane. The chain crosses the membrane as a helical span at residues 167–187 (LGLSVGLWGVAALLTLPVTLA). Residues 188 to 207 (SGASGGLCTPVYSMELKALQ) are Extracellular-facing. The chain crosses the membrane as a helical span at residues 208 to 228 (ATHAVACLAIFVLLPLGLFGA). Residues 229 to 244 (KGLKKALGMGPGPWMN) lie on the Cytoplasmic side of the membrane. The helical transmembrane segment at 245–265 (ILWAWFIFWWPHGVVLGLDFL) threads the bilayer. Residues 266-287 (VRSKLLLLSTCLAQQALDLLLN) lie on the Extracellular side of the membrane. Residues 288–308 (LAEALAILHCVATPLLLALFC) traverse the membrane as a helical segment. The Cytoplasmic portion of the chain corresponds to 309 to 336 (HQATRTLLPSLPLPEGWSSHLDTLGSKS).

Belongs to the G-protein coupled receptor 1 family. Atypical chemokine receptor subfamily.

The protein localises to the early endosome. Its subcellular location is the recycling endosome. The protein resides in the membrane. Its function is as follows. Atypical chemokine receptor that controls chemokine levels and localization via high-affinity chemokine binding that is uncoupled from classic ligand-driven signal transduction cascades, resulting instead in chemokine sequestration, degradation, or transcytosis. Also known as interceptor (internalizing receptor) or chemokine-scavenging receptor or chemokine decoy receptor. Has a promiscuous chemokine-binding profile, interacting with inflammatory chemokines of both the CXC and the CC subfamilies but not with homeostatic chemokines. Acts as a receptor for chemokines including CCL2, CCL5, CCL7, CCL11, CCL13, CCL14, CCL17, CXCL5, CXCL6, IL8/CXCL8, CXCL11, GRO, RANTES, MCP-1 and TARC. May regulate chemokine bioavailability and, consequently, leukocyte recruitment through two distinct mechanisms: when expressed in endothelial cells, it sustains the abluminal to luminal transcytosis of tissue-derived chemokines and their subsequent presentation to circulating leukocytes; when expressed in erythrocytes, serves as blood reservoir of cognate chemokines but also as a chemokine sink, buffering potential surges in plasma chemokine levels. The sequence is that of Atypical chemokine receptor 1 (ACKR1) from Papio hamadryas (Hamadryas baboon).